The chain runs to 215 residues: 3-isopropylmalate dehydratase small subunit (215 aa).

The protein belongs to the LeuD family. LeuD type 1 subfamily. Heterodimer of LeuC and LeuD.

The catalysed reaction is (2R,3S)-3-isopropylmalate = (2S)-2-isopropylmalate. Its pathway is amino-acid biosynthesis; L-leucine biosynthesis; L-leucine from 3-methyl-2-oxobutanoate: step 2/4. Its function is as follows. Catalyzes the isomerization between 2-isopropylmalate and 3-isopropylmalate, via the formation of 2-isopropylmaleate. In Acinetobacter baumannii (strain AB307-0294), this protein is 3-isopropylmalate dehydratase small subunit.